The following is a 505-amino-acid chain: Pleckstrin homology domain-containing family D member 1 (505 aa).

The 109-residue stretch at 28–136 folds into the PH domain; the sequence is KVQLYGVLWK…WLEMLQESGK (109 aa). Positions 146–391 form a coiled coil; that stretch reads EAMIKSLEAQ…KVRNKEKEER (246 aa). A disordered region spans residues 264 to 284; that stretch reads DKNQPQPLTNQSEQPPATDGL. Residues 267 to 278 are compositionally biased toward polar residues; sequence QPQPLTNQSEQP. Arg502 is modified (omega-N-methylarginine).

It belongs to the PLEKHD1 family.

The sequence is that of Pleckstrin homology domain-containing family D member 1 (Plekhd1) from Rattus norvegicus (Rat).